The primary structure comprises 156 residues: Small ribosomal subunit protein uS7 (156 aa).

It belongs to the universal ribosomal protein uS7 family. As to quaternary structure, part of the 30S ribosomal subunit. Contacts proteins S9 and S11.

One of the primary rRNA binding proteins, it binds directly to 16S rRNA where it nucleates assembly of the head domain of the 30S subunit. Is located at the subunit interface close to the decoding center, probably blocks exit of the E-site tRNA. This Buchnera aphidicola subsp. Cinara cedri (strain Cc) protein is Small ribosomal subunit protein uS7.